The following is a 156-amino-acid chain: Transcription antitermination protein NusB (156 aa).

The protein belongs to the NusB family.

Involved in transcription antitermination. Required for transcription of ribosomal RNA (rRNA) genes. Binds specifically to the boxA antiterminator sequence of the ribosomal RNA (rrn) operons. The protein is Transcription antitermination protein NusB of Mycobacterium tuberculosis (strain CDC 1551 / Oshkosh).